Reading from the N-terminus, the 227-residue chain is Cytochrome c oxidase subunit 2 (227 aa).

At 1–14 (MAYPFQLGLQDATS) the chain is on the mitochondrial intermembrane side. A helical transmembrane segment spans residues 15–45 (PIMEELLHFHDHTLMIVFLISSLVLYIISLM). Residues 46-59 (LTTKLTHTSTMDAQ) lie on the Mitochondrial matrix side of the membrane. A helical membrane pass occupies residues 60-87 (EVETVWTILPAIILILIALPSLRILYMM). The Mitochondrial intermembrane segment spans residues 88–227 (DEINNPSLTV…YFETWSALMV (140 aa)). Cu cation contacts are provided by His161, Cys196, Glu198, Cys200, His204, and Met207. Glu198 contributes to the Mg(2+) binding site. A Phosphotyrosine modification is found at Tyr218.

The protein belongs to the cytochrome c oxidase subunit 2 family. As to quaternary structure, component of the cytochrome c oxidase (complex IV, CIV), a multisubunit enzyme composed of 14 subunits. The complex is composed of a catalytic core of 3 subunits MT-CO1, MT-CO2 and MT-CO3, encoded in the mitochondrial DNA, and 11 supernumerary subunits COX4I, COX5A, COX5B, COX6A, COX6B, COX6C, COX7A, COX7B, COX7C, COX8 and NDUFA4, which are encoded in the nuclear genome. The complex exists as a monomer or a dimer and forms supercomplexes (SCs) in the inner mitochondrial membrane with NADH-ubiquinone oxidoreductase (complex I, CI) and ubiquinol-cytochrome c oxidoreductase (cytochrome b-c1 complex, complex III, CIII), resulting in different assemblies (supercomplex SCI(1)III(2)IV(1) and megacomplex MCI(2)III(2)IV(2)). Found in a complex with TMEM177, COA6, COX18, COX20, SCO1 and SCO2. Interacts with TMEM177 in a COX20-dependent manner. Interacts with COX20. Interacts with COX16. Requires Cu cation as cofactor.

The protein localises to the mitochondrion inner membrane. It catalyses the reaction 4 Fe(II)-[cytochrome c] + O2 + 8 H(+)(in) = 4 Fe(III)-[cytochrome c] + 2 H2O + 4 H(+)(out). In terms of biological role, component of the cytochrome c oxidase, the last enzyme in the mitochondrial electron transport chain which drives oxidative phosphorylation. The respiratory chain contains 3 multisubunit complexes succinate dehydrogenase (complex II, CII), ubiquinol-cytochrome c oxidoreductase (cytochrome b-c1 complex, complex III, CIII) and cytochrome c oxidase (complex IV, CIV), that cooperate to transfer electrons derived from NADH and succinate to molecular oxygen, creating an electrochemical gradient over the inner membrane that drives transmembrane transport and the ATP synthase. Cytochrome c oxidase is the component of the respiratory chain that catalyzes the reduction of oxygen to water. Electrons originating from reduced cytochrome c in the intermembrane space (IMS) are transferred via the dinuclear copper A center (CU(A)) of subunit 2 and heme A of subunit 1 to the active site in subunit 1, a binuclear center (BNC) formed by heme A3 and copper B (CU(B)). The BNC reduces molecular oxygen to 2 water molecules using 4 electrons from cytochrome c in the IMS and 4 protons from the mitochondrial matrix. In Urocyon cinereoargenteus (Gray fox), this protein is Cytochrome c oxidase subunit 2 (MT-CO2).